The chain runs to 201 residues: dITP/XTP pyrophosphatase (201 aa).

Thr-7 to Lys-12 is a binding site for substrate. Glu-40 and Asp-69 together coordinate Mg(2+). Residue Asp-69 is the Proton acceptor of the active site. Substrate is bound by residues Ser-70, Phe-152–Asp-155, Lys-175, and His-180–Arg-181.

This sequence belongs to the HAM1 NTPase family. Homodimer. Requires Mg(2+) as cofactor.

It catalyses the reaction XTP + H2O = XMP + diphosphate + H(+). It carries out the reaction dITP + H2O = dIMP + diphosphate + H(+). The catalysed reaction is ITP + H2O = IMP + diphosphate + H(+). In terms of biological role, pyrophosphatase that catalyzes the hydrolysis of nucleoside triphosphates to their monophosphate derivatives, with a high preference for the non-canonical purine nucleotides XTP (xanthosine triphosphate), dITP (deoxyinosine triphosphate) and ITP. Seems to function as a house-cleaning enzyme that removes non-canonical purine nucleotides from the nucleotide pool, thus preventing their incorporation into DNA/RNA and avoiding chromosomal lesions. The sequence is that of dITP/XTP pyrophosphatase from Desulforamulus reducens (strain ATCC BAA-1160 / DSM 100696 / MI-1) (Desulfotomaculum reducens).